Here is a 149-residue protein sequence, read N- to C-terminus: Large ribosomal subunit protein bL9 (149 aa).

This sequence belongs to the bacterial ribosomal protein bL9 family.

Its function is as follows. Binds to the 23S rRNA. The protein is Large ribosomal subunit protein bL9 of Helicobacter pylori (strain HPAG1).